Here is a 362-residue protein sequence, read N- to C-terminus: G-protein coupled receptor homolog US27 (362 aa).

Topologically, residues methionine 1–arginine 34 are virion surface. Asparagine 7, asparagine 15, asparagine 18, and asparagine 22 each carry an N-linked (GlcNAc...) asparagine; by host glycan. A helical transmembrane segment spans residues leucine 35–tyrosine 58. Topologically, residues arginine 59–aspartate 67 are intravirion. Residues threonine 68 to tyrosine 90 form a helical membrane-spanning segment. At alanine 91–serine 104 the chain is on the virion surface side. A helical membrane pass occupies residues glycine 105–methionine 126. The Intravirion segment spans residues aspartate 127–threonine 148. A helical transmembrane segment spans residues cysteine 149–leucine 167. Topologically, residues methionine 168–asparagine 193 are virion surface. The chain crosses the membrane as a helical span at residues threonine 194 to asparagine 213. Residues arginine 214–valine 233 are Intravirion-facing. The helical transmembrane segment at leucine 234 to isoleucine 257 threads the bilayer. At arginine 258–phenylalanine 274 the chain is on the virion surface side. The helical transmembrane segment at cysteine 275 to glycine 298 threads the bilayer. At threonine 299–leucine 362 the chain is on the intravirion side. Residues threonine 341–leucine 362 are disordered.

This sequence belongs to the G-protein coupled receptor 1 family. As to quaternary structure, heterodimer with US28. Interacts with host Gi alpha-1 subunit GNAI1; this interaction does not lead to the catalytic activation of Gi complex.

Its subcellular location is the virion. It is found in the host cell membrane. Interacts with the host Gi complex without activating it, thereby probably interfering with the chemokine-Gi signaling. May also function as a G protein sink to sequester G protein from the cell surface via internalization. Plays an important role in spread of HCMV via the extracellular route. This is G-protein coupled receptor homolog US27 (US27) from Homo sapiens (Human).